Here is a 351-residue protein sequence, read N- to C-terminus: MGKLQDGIAIKRINDAITTFKNYKLGELKQGGSMAINTLSNVRAHVGLAWPAILRNCLIHTSSHLGFMKFMIDIATTWKVGAFTLLGSVGDEDPFTDVDLIYTKTCLHLGLKDNDFLQFPEEFAYEANSFLEAQSMNAKVDMLTGVHNIEDKYVFRMQSISKFLKAYYTASEDVAYLTGFIKPDDSKDSILNAELLEAQVTSEVLRVRNLITTKIQKYINLYEDSQLPHFRQAALSYIQDWDVDGGVPAALPQPDTTDDERPVTKPGPSTPTVSKGVDEPEDEEMIRKKVETSKDAPSKADPPGNVSPRGVPALLEDDMSEMDMPDGFHDYLTREHENNFDLSQLGLAPSV.

Positions glycine 246–aspartate 330 are disordered. Residues methionine 285–serine 298 show a composition bias toward basic and acidic residues. Residues leucine 315–methionine 324 are compositionally biased toward acidic residues.

This sequence belongs to the phytoreovirus minor outer capsid protein P9 family.

Its subcellular location is the virion. The protein localises to the host cytoplasm. Minor outer capsid protein. The chain is Minor outer capsid protein P9 from Alopecurus aequalis (Barnyard grass).